The following is an 89-amino-acid chain: Large ribosomal subunit protein bL31B (89 aa).

The segment at 70 to 89 (RVQRFESRRRRRQQQSGEQG) is disordered.

It belongs to the bacterial ribosomal protein bL31 family. Type B subfamily. As to quaternary structure, part of the 50S ribosomal subunit.

This is Large ribosomal subunit protein bL31B from Rubrobacter xylanophilus (strain DSM 9941 / JCM 11954 / NBRC 16129 / PRD-1).